We begin with the raw amino-acid sequence, 706 residues long: Fatty acid oxidation complex subunit alpha (706 aa).

Residues 1 to 188 (MEKTFSLSRR…KMGLVDDVVP (188 aa)) are enoyl-CoA hydratase. Positions 308–706 (RKVAKAVVLG…AMAAEGKTFY (399 aa)) are 3-hydroxyacyl-CoA dehydrogenase.

This sequence in the N-terminal section; belongs to the enoyl-CoA hydratase/isomerase family. The protein in the central section; belongs to the 3-hydroxyacyl-CoA dehydrogenase family. As to quaternary structure, heterotetramer of two alpha chains (FadJ) and two beta chains (FadI).

The protein resides in the cytoplasm. It carries out the reaction a (3S)-3-hydroxyacyl-CoA = a (2E)-enoyl-CoA + H2O. The enzyme catalyses a 4-saturated-(3S)-3-hydroxyacyl-CoA = a (3E)-enoyl-CoA + H2O. The catalysed reaction is a (3S)-3-hydroxyacyl-CoA + NAD(+) = a 3-oxoacyl-CoA + NADH + H(+). It catalyses the reaction (3S)-3-hydroxybutanoyl-CoA = (3R)-3-hydroxybutanoyl-CoA. It participates in lipid metabolism; fatty acid beta-oxidation. In terms of biological role, catalyzes the formation of a hydroxyacyl-CoA by addition of water on enoyl-CoA. Also exhibits 3-hydroxyacyl-CoA epimerase and 3-hydroxyacyl-CoA dehydrogenase activities. In Shewanella amazonensis (strain ATCC BAA-1098 / SB2B), this protein is Fatty acid oxidation complex subunit alpha.